A 548-amino-acid polypeptide reads, in one-letter code: Synaptic vesicle 2-related protein (548 aa).

The Cytoplasmic portion of the chain corresponds to 1–87 (MEEDLFQLRQ…GFGRFQWKLS (87 aa)). Residues Ser25 and Ser31 each carry the phosphoserine modification. A helical transmembrane segment spans residues 88–108 (VLTGLAWMADAMEMMILSILA). The Vesicular portion of the chain corresponds to 109-122 (PQLHCEWRLPSWQV). A helical transmembrane segment spans residues 123 to 143 (ALLTSVVFIGMMSSSTLWGNI). Over 144–156 (SDQYGRKTGLKIS) the chain is Cytoplasmic. A helical transmembrane segment spans residues 157-177 (VFWTLYYGILSAFAPVYSWIL). Topologically, residues 178–180 (VLR) are vesicular. A helical membrane pass occupies residues 181–201 (GLVGFGIGGVPQSVTLYAEFL). Topologically, residues 202 to 209 (PMKARAKC) are cytoplasmic. Residues 210–230 (ILLIEVFWAIGTVFEVLLAVF) traverse the membrane as a helical segment. The Vesicular segment spans residues 231–238 (VMPSLGWR). A helical membrane pass occupies residues 239–259 (WLLLLSAAPLLVFAVLCFWLP). At 260–316 (ESARYDVLSGNQEKAIATLKRIATENGAPMPLGKLIISRQEDRGKMRDLFTPHFRWT) the chain is on the cytoplasmic side. The helical transmembrane segment at 317–337 (TLLLWFIWFSNAFSYYGLVLL) threads the bilayer. Topologically, residues 338–373 (TTELFQAGDVCSISSRKKAVEAKCSLACEYLSKEDY) are vesicular. A helical transmembrane segment spans residues 374 to 394 (MDLLWTTLSEFPGVLVTLWVI). At 395-401 (DRLGRKK) the chain is on the cytoplasmic side. Residues 402-422 (TMALCFVIFSLCSLLLFICIG) form a helical membrane-spanning segment. Topologically, residues 423–424 (RN) are vesicular. A helical membrane pass occupies residues 425–445 (VLTLLLFIARAFISGGFQAAY). Residues 446-457 (VYTPEVYPTATR) lie on the Cytoplasmic side of the membrane. A helical membrane pass occupies residues 458 to 478 (ALGLGTCSGMARVGALITPFI). Residues 479 to 489 (AQVMLESSVYL) lie on the Vesicular side of the membrane. A helical transmembrane segment spans residues 490–510 (TLAVYSGCCLLAALASCFLPI). Residues 511–548 (ETKGRALQESSHREWGQEMVGRGTNSTGVPRSNSGSQE) are Cytoplasmic-facing. The tract at residues 523–548 (REWGQEMVGRGTNSTGVPRSNSGSQE) is disordered. Positions 533 to 548 (GTNSTGVPRSNSGSQE) are enriched in polar residues. Ser542 bears the Phosphoserine mark.

It belongs to the major facilitator superfamily. As to expression, detected in brain (at protein level). Detected in brain, in synaptic layers of the cerebellum, hippocampus and cerebral cortex.

Its subcellular location is the cytoplasmic vesicle. It is found in the secretory vesicle. The protein resides in the synaptic vesicle membrane. The chain is Synaptic vesicle 2-related protein (Svop) from Rattus norvegicus (Rat).